The chain runs to 39 residues: Photosystem II reaction center protein J (39 aa).

A helical membrane pass occupies residues 9–29; it reads LWLVGLVGGLAVITMLGLFIY.

This sequence belongs to the PsbJ family. In terms of assembly, PSII is composed of 1 copy each of membrane proteins PsbA, PsbB, PsbC, PsbD, PsbE, PsbF, PsbH, PsbI, PsbJ, PsbK, PsbL, PsbM, PsbT, PsbX, PsbY, PsbZ, Psb30/Ycf12, at least 3 peripheral proteins of the oxygen-evolving complex and a large number of cofactors. It forms dimeric complexes.

It is found in the plastid. It localises to the chloroplast thylakoid membrane. In terms of biological role, one of the components of the core complex of photosystem II (PSII). PSII is a light-driven water:plastoquinone oxidoreductase that uses light energy to abstract electrons from H(2)O, generating O(2) and a proton gradient subsequently used for ATP formation. It consists of a core antenna complex that captures photons, and an electron transfer chain that converts photonic excitation into a charge separation. This chain is Photosystem II reaction center protein J, found in Phaeodactylum tricornutum (strain CCAP 1055/1).